The primary structure comprises 148 residues: Large ribosomal subunit protein uL15 (148 aa).

Residues 1-30 (MPSRLRKTRKLRGHVSHGHGRIGKHRKHPG) are compositionally biased toward basic residues. The interval 1–39 (MPSRLRKTRKLRGHVSHGHGRIGKHRKHPGGRGNAGGLH) is disordered. Histidine 39 is modified ((3S)-3-hydroxyhistidine). Residues lysine 47 and lysine 55 each carry the N6-acetyllysine modification. Serine 68 bears the Phosphoserine mark. Position 110 is an N6-acetyllysine (lysine 110).

It belongs to the universal ribosomal protein uL15 family. Component of the large ribosomal subunit. Hydroxylated on His-39 by MINA.

It localises to the cytoplasm. Its function is as follows. Component of the large ribosomal subunit. The ribosome is a large ribonucleoprotein complex responsible for the synthesis of proteins in the cell. The chain is Large ribosomal subunit protein uL15 (RPL27A) from Macaca fascicularis (Crab-eating macaque).